The sequence spans 623 residues: Glutathione import ATP-binding protein GsiA (623 aa).

2 ABC transporter domains span residues 15–269 (VENL…RALL) and 314–564 (LRVR…RKLL). Residues 49–56 (GESGSGKS) and 357–364 (GESGSGKS) each bind ATP.

It belongs to the ABC transporter superfamily. Glutathione importer (TC 3.A.1.5.11) family. In terms of assembly, the complex is composed of two ATP-binding proteins (GsiA), two transmembrane proteins (GsiC and GsiD) and a solute-binding protein (GsiB).

Its subcellular location is the cell inner membrane. The enzyme catalyses glutathione(out) + ATP + H2O = glutathione(in) + ADP + phosphate + H(+). In terms of biological role, part of the ABC transporter complex GsiABCD involved in glutathione import. Responsible for energy coupling to the transport system. The protein is Glutathione import ATP-binding protein GsiA of Shigella boydii serotype 4 (strain Sb227).